A 226-amino-acid chain; its full sequence is Ribonuclease 3 (226 aa).

The RNase III domain maps to 5–127 (IFQRGDPIGH…IVAAIYLDCG (123 aa)). Position 40 (Glu40) interacts with Mg(2+). The active site involves Asp44. Mg(2+) is bound by residues Asp113 and Glu116. Residue Glu116 is part of the active site. The 71-residue stretch at 154–224 (DPKTRLQEWL…ATLVIAQLDS (71 aa)) folds into the DRBM domain.

The protein belongs to the ribonuclease III family. Homodimer. It depends on Mg(2+) as a cofactor.

It is found in the cytoplasm. The catalysed reaction is Endonucleolytic cleavage to 5'-phosphomonoester.. Functionally, digests double-stranded RNA. Involved in the processing of primary rRNA transcript to yield the immediate precursors to the large and small rRNAs (23S and 16S). Processes some mRNAs, and tRNAs when they are encoded in the rRNA operon. Processes pre-crRNA and tracrRNA of type II CRISPR loci if present in the organism. The protein is Ribonuclease 3 of Xanthomonas oryzae pv. oryzae (strain KACC10331 / KXO85).